A 795-amino-acid polypeptide reads, in one-letter code: Phenylalanine--tRNA ligase beta subunit (795 aa).

The region spanning 39-148 is the tRNA-binding domain; that stretch reads AGTFNGVVVG…LDAPIGTDLR (110 aa). Positions 401-476 constitute a B5 domain; sequence PKVNTVQLRR…RIYGYNSIPN (76 aa). The Mg(2+) site is built by aspartate 454, aspartate 460, glutamate 463, and glutamate 464. An FDX-ACB domain is found at 701–794; sequence SKFPANRRDL…VKQRFNAELR (94 aa).

The protein belongs to the phenylalanyl-tRNA synthetase beta subunit family. Type 1 subfamily. As to quaternary structure, tetramer of two alpha and two beta subunits. Mg(2+) serves as cofactor.

It localises to the cytoplasm. The enzyme catalyses tRNA(Phe) + L-phenylalanine + ATP = L-phenylalanyl-tRNA(Phe) + AMP + diphosphate + H(+). This is Phenylalanine--tRNA ligase beta subunit (pheT) from Haemophilus influenzae (strain ATCC 51907 / DSM 11121 / KW20 / Rd).